Consider the following 309-residue polypeptide: Olfactory receptor 7A40 (309 aa).

The Extracellular portion of the chain corresponds to 1-26 (MELKNDTQISKFILLGISEDPLWQPF). N-linked (GlcNAc...) asparagine glycosylation occurs at asparagine 5. The chain crosses the membrane as a helical span at residues 27 to 47 (LFGLFLFMYLVTLLGNLLIII). Topologically, residues 48-57 (ATITDSHLHT) are cytoplasmic. A helical membrane pass occupies residues 58–78 (PMYFFLSNLSFADICFTSASI). The Extracellular segment spans residues 79–97 (PKMLVNIQTKNKVITYEGC). Residues cysteine 97 and cysteine 179 are joined by a disulfide bond. Residues 98–118 (ISQVFFFILFGVLDNFLLAVM) form a helical membrane-spanning segment. The Cytoplasmic segment spans residues 119–139 (AYDRYVAICHPLHYMVIMNCR). Residues 140–160 (LCGFLVLGSWVTTALNSLLQS) traverse the membrane as a helical segment. The Extracellular portion of the chain corresponds to 161–196 (SMALRLSFCTDLKIPHFVCELNQLVLLACNDTFPND). The chain crosses the membrane as a helical span at residues 197-217 (MVMYFAAILLGGGPLAGILYS). Residues 218 to 244 (YSKIVSSIRAISSSQGKYKAFSTCASH) are Cytoplasmic-facing. Residues 245–265 (LSVVSLFYSTLLGVYLSSSFT) traverse the membrane as a helical segment. At 266–269 (QNSH) the chain is on the extracellular side. A helical transmembrane segment spans residues 270 to 292 (STARASVMYSVVTPMLNPFIYSL). Residues 293-309 (RNKDLMGALRRLLRRKS) lie on the Cytoplasmic side of the membrane.

This sequence belongs to the G-protein coupled receptor 1 family.

The protein localises to the cell membrane. Its function is as follows. Odorant receptor. The protein is Olfactory receptor 7A40 of Mus musculus (Mouse).